A 759-amino-acid chain; its full sequence is Zinc finger protein 287 (759 aa).

The SCAN box domain occupies 42-124 (RRNFRNFPYP…ALVEDLTQIL (83 aa)). Residues 127-154 (EEAPQSSALPQDTPEDDPNHDPNPASQA) form a disordered region. The 69-residue stretch at 166-234 (VTFNDVAVDI…IKEIVEGPNP (69 aa)) folds into the KRAB domain. 14 C2H2-type zinc fingers span residues 366 to 388 (YSCNVCGKQFRKYPSLLAHRENH), 394 to 416 (YECEECGKEFKHLSSLIAHQRMH), 422 to 444 (YECHQCGKAFSQRAHLTIHQRIH), 450 to 472 (YKCEDCGKDFSQRAHLTIHQRTH), 478 to 500 (YKCLECSKTFSHSSSLINHQRVH), 506 to 528 (YICNECGKTFSQSTHLLQHQKIH), 534 to 556 (YKCNECWKVFSQSTYLIRHQRIH), 562 to 584 (YKCTACGKAFAHSSTLIQHQTTH), 590 to 612 (YICNVCGKAFSQSANLTQHHRTH), 618 to 640 (YKCSVCGKAFSQSVHLTQHQRIH), 646 to 668 (FKCNTCGKAYRQGANLTQHQRVH), 674 to 696 (YKCHHCGKAFIYSSSLNQHRRTH), 702 to 724 (YKCSHCNKDFSQRTCLIQHQRIH), and 730 to 752 (YGCRICGKAFTQSTNLIQHQRVH).

It belongs to the krueppel C2H2-type zinc-finger protein family. In terms of tissue distribution, expressed in brain and at low levels in kidney and spleen and few hematopoietic cell lines.

The protein localises to the nucleus. In terms of biological role, may be involved in transcriptional regulation. This is Zinc finger protein 287 from Mus musculus (Mouse).